Reading from the N-terminus, the 177-residue chain is Large ribosomal subunit protein uL6 (177 aa).

Belongs to the universal ribosomal protein uL6 family. In terms of assembly, part of the 50S ribosomal subunit.

This protein binds to the 23S rRNA, and is important in its secondary structure. It is located near the subunit interface in the base of the L7/L12 stalk, and near the tRNA binding site of the peptidyltransferase center. The sequence is that of Large ribosomal subunit protein uL6 from Magnetococcus marinus (strain ATCC BAA-1437 / JCM 17883 / MC-1).